Consider the following 162-residue polypeptide: Inorganic pyrophosphatase (162 aa).

Glu8 is a binding site for Mg(2+). 3 residues coordinate substrate: Lys16, Arg30, and Tyr42. Mg(2+)-binding residues include Asp52, Asp57, Asp84, and Asp89. Asp89 serves as the catalytic Proton acceptor. A substrate-binding site is contributed by Tyr126.

This sequence belongs to the PPase family. In terms of assembly, homohexamer. Mg(2+) serves as cofactor.

It is found in the cytoplasm. The enzyme catalyses diphosphate + H2O = 2 phosphate + H(+). Functionally, catalyzes the hydrolysis of inorganic pyrophosphate (PPi) forming two phosphate ions. The polypeptide is Inorganic pyrophosphatase (Mycobacterium leprae (strain TN)).